Here is a 528-residue protein sequence, read N- to C-terminus: Glycerol kinase 5 (528 aa).

Residues S28 and S29 each contribute to the ATP site. Residues R98, D275, and Q276 each coordinate glycerol. Residues T297, G340, and G440 each contribute to the ATP site.

This sequence belongs to the FGGY kinase family.

It is found in the cytoplasm. It catalyses the reaction glycerol + ATP = sn-glycerol 3-phosphate + ADP + H(+). It functions in the pathway polyol metabolism; glycerol degradation via glycerol kinase pathway; sn-glycerol 3-phosphate from glycerol: step 1/1. Its function is as follows. Skin-specific kinase that plays a key role in glycerol metabolism, catalyzing its phosphorylation to produce sn-glycerol 3-phosphate. Involved in skin-specific regulation of sterol regulatory element-binding protein (SREBP) processing and lipid biosynthesis. The protein is Glycerol kinase 5 (GK5) of Bos taurus (Bovine).